Here is a 412-residue protein sequence, read N- to C-terminus: MTSASEPEIAPDPINWKRNLFVAWIGCFLTGAAFSLIMPFLPLYVETLGVTGHESLNMWSGLVFSITFLFSAIASPFWGGLADRKGRKIMLLRSALGMSIVMVLMGFAQNIWQFLILRALLGLLGGFVPNANALIATQIPRNKSGWALGTLSTGGVSGALLGPLVGGLLADSYGLRPVFFITASVLFLCFIMTLYFIREQFVPVSKKDMLNRKQVFASLKNPKLVLCLFVTTMIIQVATGSIAPILTLYVRELAGNTQNLAFISGMIASVPGVAALMSAPRLGKLGDRIGPERILVAMMALSVLLLIPMALVQTPLQLGILRFLLGACDGALLPAVQTLLIYNCTNQVAGRVFSYNQSFRDVGNVTGPLLGAAVSASYGFRTVFFVTAMVVLFNAGYSYWCLQRRPHQAMID.

Helical transmembrane passes span 20-40 (LFVAWIGCFLTGAAFSLIMPF), 62-82 (LVFSITFLFSAIASPFWGGLA), 96-116 (LGMSIVMVLMGFAQNIWQFLI), 119-139 (ALLGLLGGFVPNANALIATQI), 150-170 (TLSTGGVSGALLGPLVGGLLA), 177-197 (PVFFITASVLFLCFIMTLYFI), 225-245 (VLCLFVTTMIIQVATGSIAPI), 260-280 (LAFISGMIASVPGVAALMSAP), 294-314 (ILVAMMALSVLLLIPMALVQT), and 382-402 (TVFFVTAMVVLFNAGYSYWCL).

This sequence belongs to the major facilitator superfamily. DHA1 family. MdtG (TC 2.A.1.2.20) subfamily.

The protein resides in the cell inner membrane. The polypeptide is Multidrug resistance protein MdtG (Rahnella sp. (strain Y9602)).